A 291-amino-acid chain; its full sequence is ATP synthase gamma chain (291 aa).

Belongs to the ATPase gamma chain family. In terms of assembly, F-type ATPases have 2 components, CF(1) - the catalytic core - and CF(0) - the membrane proton channel. CF(1) has five subunits: alpha(3), beta(3), gamma(1), delta(1), epsilon(1). CF(0) has three main subunits: a, b and c.

Its subcellular location is the cell inner membrane. Functionally, produces ATP from ADP in the presence of a proton gradient across the membrane. The gamma chain is believed to be important in regulating ATPase activity and the flow of protons through the CF(0) complex. This is ATP synthase gamma chain from Burkholderia ambifaria (strain MC40-6).